Here is a 197-residue protein sequence, read N- to C-terminus: Phosphoheptose isomerase (197 aa).

One can recognise an SIS domain in the interval 37–197 (MLQCLMNDGK…CIDSVLLEGM (161 aa)). Residue 52 to 54 (NGG) coordinates substrate. H61 and E65 together coordinate Zn(2+). Residues E65, 94 to 95 (ND), 120 to 122 (STS), S125, and Q175 contribute to the substrate site. Zn(2+) is bound by residues Q175 and H183.

It belongs to the SIS family. GmhA subfamily. Homotetramer. Requires Zn(2+) as cofactor.

The protein resides in the cytoplasm. The catalysed reaction is 2 D-sedoheptulose 7-phosphate = D-glycero-alpha-D-manno-heptose 7-phosphate + D-glycero-beta-D-manno-heptose 7-phosphate. It functions in the pathway carbohydrate biosynthesis; D-glycero-D-manno-heptose 7-phosphate biosynthesis; D-glycero-alpha-D-manno-heptose 7-phosphate and D-glycero-beta-D-manno-heptose 7-phosphate from sedoheptulose 7-phosphate: step 1/1. Its function is as follows. Catalyzes the isomerization of sedoheptulose 7-phosphate in D-glycero-D-manno-heptose 7-phosphate. In Neisseria meningitidis serogroup C / serotype 2a (strain ATCC 700532 / DSM 15464 / FAM18), this protein is Phosphoheptose isomerase.